The sequence spans 375 residues: Chaperone protein DnaJ (375 aa).

One can recognise a J domain in the interval 5–70 (DFYETLGVAK…QKRAAYDRYG (66 aa)). A CR-type zinc finger spans residues 136–214 (GKTAQIRVPT…CHGQGRVTEE (79 aa)). The Zn(2+) site is built by C149, C152, C166, C169, C188, C191, C202, and C205. 4 CXXCXGXG motif repeats span residues 149–156 (CDVCSGSG), 166–173 (CGTCQGTG), 188–195 (CPTCHGRG), and 202–209 (CPKCHGQG).

The protein belongs to the DnaJ family. In terms of assembly, homodimer. Zn(2+) is required as a cofactor.

Its subcellular location is the cytoplasm. Its function is as follows. Participates actively in the response to hyperosmotic and heat shock by preventing the aggregation of stress-denatured proteins and by disaggregating proteins, also in an autonomous, DnaK-independent fashion. Unfolded proteins bind initially to DnaJ; upon interaction with the DnaJ-bound protein, DnaK hydrolyzes its bound ATP, resulting in the formation of a stable complex. GrpE releases ADP from DnaK; ATP binding to DnaK triggers the release of the substrate protein, thus completing the reaction cycle. Several rounds of ATP-dependent interactions between DnaJ, DnaK and GrpE are required for fully efficient folding. Also involved, together with DnaK and GrpE, in the DNA replication of plasmids through activation of initiation proteins. This chain is Chaperone protein DnaJ, found in Rhizobium etli (strain ATCC 51251 / DSM 11541 / JCM 21823 / NBRC 15573 / CFN 42).